The sequence spans 245 residues: 1-(5-phosphoribosyl)-5-[(5-phosphoribosylamino)methylideneamino] imidazole-4-carboxamide isomerase (245 aa).

Aspartate 7 acts as the Proton acceptor in catalysis. Residue aspartate 129 is the Proton donor of the active site.

This sequence belongs to the HisA/HisF family.

It is found in the cytoplasm. It catalyses the reaction 1-(5-phospho-beta-D-ribosyl)-5-[(5-phospho-beta-D-ribosylamino)methylideneamino]imidazole-4-carboxamide = 5-[(5-phospho-1-deoxy-D-ribulos-1-ylimino)methylamino]-1-(5-phospho-beta-D-ribosyl)imidazole-4-carboxamide. The protein operates within amino-acid biosynthesis; L-histidine biosynthesis; L-histidine from 5-phospho-alpha-D-ribose 1-diphosphate: step 4/9. This is 1-(5-phosphoribosyl)-5-[(5-phosphoribosylamino)methylideneamino] imidazole-4-carboxamide isomerase from Escherichia fergusonii (strain ATCC 35469 / DSM 13698 / CCUG 18766 / IAM 14443 / JCM 21226 / LMG 7866 / NBRC 102419 / NCTC 12128 / CDC 0568-73).